The primary structure comprises 1034 residues: Presequence protease, mitochondrial (1034 aa).

The N-terminal 26 residues, Met1 to Ser26, are a transit peptide targeting the mitochondrion. His97 contacts Zn(2+). The active-site Proton acceptor is Glu100. Residue His101 coordinates Zn(2+). Glu173 is an active-site residue. Glu198 contacts Zn(2+).

This sequence belongs to the peptidase M16 family. PreP subfamily. In terms of assembly, monomer and homodimer; homodimerization is induced by binding of the substrate. Zn(2+) is required as a cofactor.

The protein resides in the mitochondrion intermembrane space. The protein localises to the mitochondrion matrix. In terms of biological role, degrades mitochondrial transit peptides after their cleavage in the intermembrane space or in the matrix, and presequence peptides; clearance of these peptides is required to keep the presequence processing machinery running. Preferentially cleaves the N-terminal side of paired basic amino acid residues. Also degrades other unstructured peptides. May function as an ATP-dependent peptidase as opposed to a metalloendopeptidase. The polypeptide is Presequence protease, mitochondrial (CYM1) (Candida albicans (strain SC5314 / ATCC MYA-2876) (Yeast)).